The following is a 721-amino-acid chain: Exocyst complex component 3-like protein 4 (721 aa).

Disordered regions lie at residues 1-52 and 94-135; these read MPLP…SLGM and GLTA…QAES. Residues 22–37 are compositionally biased toward polar residues; the sequence is SQTLPVTTWKSNSMKE. Position 515 is a phosphoserine (Ser515).

This sequence belongs to the SEC6 family.

This chain is Exocyst complex component 3-like protein 4 (Exoc3l4), found in Mus musculus (Mouse).